The chain runs to 142 residues: Deoxyuridine 5'-triphosphate nucleotidohydrolase (142 aa).

Residues 62–64 (RSG), asparagine 75, and 79–81 (TID) each bind substrate.

This sequence belongs to the dUTPase family. Requires Mg(2+) as cofactor.

It carries out the reaction dUTP + H2O = dUMP + diphosphate + H(+). It participates in pyrimidine metabolism; dUMP biosynthesis; dUMP from dCTP (dUTP route): step 2/2. Its function is as follows. This enzyme is involved in nucleotide metabolism: it produces dUMP, the immediate precursor of thymidine nucleotides and it decreases the intracellular concentration of dUTP so that uracil cannot be incorporated into DNA. The chain is Deoxyuridine 5'-triphosphate nucleotidohydrolase from Trichodesmium erythraeum (strain IMS101).